A 146-amino-acid chain; its full sequence is VEWTDQERATISSIFGSLDYDDIGPKALSRCLIVYPWTQRHFGSFGNLYNAEAIIGNQKVAAHGIKVLHGLDRAVKNMDNIKEIYAELSILHSEKLHVDPDNFKLLADCLTIVVAAKMGSGFNPGTQATFQKFLAVVVSALGKQYH.

Positions 2–146 (EWTDQERATI…VVSALGKQYH (145 aa)) constitute a Globin domain. 2 residues coordinate heme b: His63 and His92.

The protein belongs to the globin family. Hb1 is a heterotetramer of two alpha-1 chains and two beta-1 chains. Hb2 is a heterotetramer of two alpha-2 chains and two beta-1 chains. HbC is a heterotetramer of two alpha-1 chains and two beta-2 chains. Red blood cells.

Functionally, involved in oxygen transport from gills to the various peripheral tissues. The chain is Hemoglobin subunit beta-1 from Eleginops maclovinus (Patagonian blennie).